We begin with the raw amino-acid sequence, 468 residues long: Probable citrate synthase, mitochondrial (468 aa).

Residues His303, His349, and Asp404 contribute to the active site.

This sequence belongs to the citrate synthase family. As to quaternary structure, homodimer.

The protein resides in the mitochondrion matrix. The enzyme catalyses oxaloacetate + acetyl-CoA + H2O = citrate + CoA + H(+). It functions in the pathway carbohydrate metabolism; tricarboxylic acid cycle; isocitrate from oxaloacetate: step 1/2. In Caenorhabditis briggsae, this protein is Probable citrate synthase, mitochondrial (cts-1).